The sequence spans 235 residues: LexA repressor (235 aa).

Positions 26–46 (FDEMKEALDLASKSGIHRLIT) form a DNA-binding region, H-T-H motif. Positions 72-104 (QATTAAPPKGRGAFRPQVLEGGGQAPTTSAQPQ) are disordered. Active-site for autocatalytic cleavage activity residues include serine 156 and lysine 193.

This sequence belongs to the peptidase S24 family. In terms of assembly, homodimer.

It carries out the reaction Hydrolysis of Ala-|-Gly bond in repressor LexA.. In terms of biological role, represses a number of genes involved in the response to DNA damage (SOS response), including recA and lexA. In the presence of single-stranded DNA, RecA interacts with LexA causing an autocatalytic cleavage which disrupts the DNA-binding part of LexA, leading to derepression of the SOS regulon and eventually DNA repair. The protein is LexA repressor of Caulobacter sp. (strain K31).